The primary structure comprises 306 residues: MVHVRKNHLTMTAEEKRRFVHAVLEIKRRGIYDRFVKLHIQINSTDYLDKETGKRLGHVNPGFLPWHRQYLLKFEQALQKVDPRVTLPYWDWTTDHGENSPLWSDTFMGGNGRPGDRRVMTGPFARRNGWKLNISVIPEGPEDPALNGNYTHDDRDYLVRDFGTLTPDLPTPQELEQTLDLTVYDCPPWNHTSGGTPPYESFRNHLEGYTKFAWEPRLGKLHGAAHVWTGGHMMYIGSPNDPVFFLNHCMIDRCWALWQARHPDVPHYLPTVPTQDVPDLNTPLGPWHTKTPADLLDHTRFYTYDQ.

Residues His-39, His-58, His-67, His-222, His-226, and His-248 each coordinate Cu(2+).

The protein belongs to the tyrosinase family. Requires Cu(2+) as cofactor.

It carries out the reaction 2 3-amino-4-hydroxybenzoate + N-acetyl-L-cysteine + 2 O2 + H(+) = grixazone B + CO2 + 4 H2O. It catalyses the reaction 2 3-amino-4-hydroxybenzaldehyde + N-acetyl-L-cysteine + 2 O2 = grixazone A + formate + 3 H2O + H(+). The enzyme catalyses 4 2-aminophenol + 3 O2 = 2 2-aminophenoxazin-3-one + 6 H2O. Inhibited by 3-amino-4-hydroxybenzensulfonic acid, 4-hydroxy-3-nitrobenzaldehyde, L-tyrosine, p-hydroxybenzaldehyde. Activated by the copper chaperone GriE. Involved in the biosynthesis of the parasiticide antibiotic grixazone. Catalyzes the oxidation of 3-amino-4-hydroxybenzoate (3,4-AHBOA) to yield the corresponding quinone imine which is then non-enzymatically conjugated with the thiol group of N-acetylcysteine. The resultant compound is oxidized to its quinone imine enzymatically and is then dimerized non-enzymatically with another quinone imine oxidized by GriF to yield grixazone B. 3-amino-4-hydroxybenzaldehyde (3,4-AHBAL) can also be used as substrate to yield grixazone A. In the grixazone biosynthetic pathway, it can also function as an o-aminophenol oxidase that catalyzes the formation of the phenoxazinone chromophore from alpha-aminophenol. It can also use 2-amino-4-methylphenol, and to a lesser extent, 3,4-dihydroxybenzaldehyde, catechol and 3,4-dihydroxy-L-phenylalanine (L-DOPA) as substrates. In contrast to tyrosinases, it does not display monophenolase activity. This chain is Grixazone synthase, found in Streptomyces griseus subsp. griseus (strain JCM 4626 / CBS 651.72 / NBRC 13350 / KCC S-0626 / ISP 5235).